A 158-amino-acid chain; its full sequence is Cysteine-rich venom protein VAR7 (158 aa).

Positions methionine 1–serine 22 are cleaved as a signal peptide. The 118-residue stretch at asparagine 41 to asparagine 158 folds into the SCP domain. A disulfide bond links cysteine 77 and cysteine 156.

This sequence belongs to the CRISP family. In terms of processing, contains 8 disulfide bonds. As to expression, expressed by the venom gland.

It is found in the secreted. In terms of biological role, blocks ryanodine receptors, and potassium channels. In Varanus acanthurus (Ridge-tailed monitor), this protein is Cysteine-rich venom protein VAR7.